A 360-amino-acid polypeptide reads, in one-letter code: Cinnamyl alcohol dehydrogenase 2 (360 aa).

The Enoyl reductase (ER) domain occupies 23–351 (GVLSPFNFSR…KADVKYRFVI (329 aa)). A Zn(2+)-binding site is contributed by C50. Position 52 (S52) interacts with an alcohol. NADP(+) is bound at residue S52. Residues D53, H72, E73, C103, C106, C109, C117, and C166 each contribute to the Zn(2+) site. An alcohol is bound at residue H72. NADP(+) contacts are provided by L192, G194, L195, S214, T215, S216, K219, K220, V277, A279, S301, and R348.

It belongs to the zinc-containing alcohol dehydrogenase family. Class-P subfamily. In terms of assembly, homodimer. Zn(2+) serves as cofactor. Mainly expressed in young roots and, to a lower extent, in stems and leaves.

It localises to the cytoplasm. The catalysed reaction is (E)-cinnamyl alcohol + NADP(+) = (E)-cinnamaldehyde + NADPH + H(+). Alcohol dehydrogenase that catalyzes the conversion of (E)-cinnamyl alcohol to (E)-cinnamaldehyde. The polypeptide is Cinnamyl alcohol dehydrogenase 2 (Rauvolfia serpentina (Serpentine wood)).